The sequence spans 133 residues: MGLTSQLIPMLVCLLACTSNFVHGHKCDVTLQEIIKTLNILTAKKNLCMELPVEDVFATTKNTTEKETFCRAGTVLRHIYRHHKCFNQPLSGLHRNLSSMANMTCSVNEAKKSTLKDFLERLKMIMKEKYSKC.

The signal sequence occupies residues 1–24 (MGLTSQLIPMLVCLLACTSNFVHG). Intrachain disulfides connect C27–C133, C48–C85, and C70–C105. N-linked (GlcNAc...) asparagine glycans are attached at residues N62, N96, and N102.

This sequence belongs to the IL-4/IL-13 family.

It localises to the secreted. Its function is as follows. Participates in at least several B-cell activation processes as well as of other cell types. It is a costimulator of DNA-synthesis. It induces the expression of class II MHC molecules on resting B-cells. It enhances both secretion and cell surface expression of IgE and IgG1. It also regulates the expression of the low affinity Fc receptor for IgE (CD23) on both lymphocytes and monocytes. Positively regulates IL31RA expression in macrophages. Stimulates autophagy in dendritic cells by interfering with mTORC1 signaling and through the induction of RUFY4. This is Interleukin-4 (IL4) from Tursiops truncatus (Atlantic bottle-nosed dolphin).